The following is a 508-amino-acid chain: Glycerol kinase (508 aa).

Residue Thr14 coordinates ADP. 3 residues coordinate ATP: Thr14, Thr15, and Ser16. Position 14 (Thr14) interacts with sn-glycerol 3-phosphate. Residue Arg18 coordinates ADP. Residues Arg84, Glu85, and Tyr136 each coordinate sn-glycerol 3-phosphate. Glycerol is bound by residues Arg84, Glu85, and Tyr136. Residue His232 is modified to Phosphohistidine; by HPr. Sn-glycerol 3-phosphate is bound at residue Asp246. Residues Asp246 and Gln247 each coordinate glycerol. ADP is bound by residues Thr268 and Gly311. Positions 268, 311, 315, and 412 each coordinate ATP. Positions 412 and 416 each coordinate ADP.

The protein belongs to the FGGY kinase family. In terms of assembly, homotetramer and homodimer (in equilibrium). Post-translationally, the phosphoenolpyruvate-dependent sugar phosphotransferase system (PTS), including enzyme I, and histidine-containing protein (HPr) are required for the phosphorylation, which leads to the activation of the enzyme.

It carries out the reaction glycerol + ATP = sn-glycerol 3-phosphate + ADP + H(+). It functions in the pathway polyol metabolism; glycerol degradation via glycerol kinase pathway; sn-glycerol 3-phosphate from glycerol: step 1/1. Its activity is regulated as follows. Activated by phosphorylation and inhibited by fructose 1,6-bisphosphate (FBP). In terms of biological role, key enzyme in the regulation of glycerol uptake and metabolism. Catalyzes the phosphorylation of glycerol to yield sn-glycerol 3-phosphate. This chain is Glycerol kinase, found in Streptococcus pyogenes serotype M12 (strain MGAS2096).